A 121-amino-acid polypeptide reads, in one-letter code: Basic phospholipase A2 homolog piratoxin-1 (121 aa).

Disulfide bonds link C26/C115, C28/C44, C43/C95, C49/C121, C50/C88, C57/C81, and C75/C86. The important for membrane-damaging activities in eukaryotes and bacteria; heparin-binding stretch occupies residues 105–117 (KLYRYHLKPFCKK).

This sequence belongs to the phospholipase A2 family. Group II subfamily. K49 sub-subfamily. In terms of assembly, homodimer; non-covalently linked. In terms of tissue distribution, expressed by the venom gland.

The protein resides in the secreted. Its activity is regulated as follows. Rosmarinic acid inhibits the myotoxic activity. Bromophenacyl bromide (BPB) inhibits the myotoxic activity through a covalent binding. Caffeic acid and aristolochic acid, two plant compounds used in folk medicine used to treat envenomation, inhibit the myotoxic activity. Its function is as follows. Snake venom phospholipase A2 (PLA2) homolog that lacks enzymatic activity. Is myotoxic and displays edema-inducing activities. Induces neuromuscular blockage. A model of myotoxic mechanism has been proposed: an apo Lys49-PLA2 is activated by the entrance of a hydrophobic molecule (e.g. fatty acid) at the hydrophobic channel of the protein leading to a reorientation of a monomer. This reorientation causes a transition between 'inactive' to 'active' states, causing alignment of C-terminal and membrane-docking sites (MDoS) side-by-side and putting the membrane-disruption sites (MDiS) in the same plane, exposed to solvent and in a symmetric position for both monomers. The MDoS region stabilizes the toxin on membrane by the interaction of charged residues with phospholipid head groups. Subsequently, the MDiS region destabilizes the membrane with penetration of hydrophobic residues. This insertion causes a disorganization of the membrane, allowing an uncontrolled influx of ions (i.e. calcium and sodium), and eventually triggering irreversible intracellular alterations and cell death. The protein is Basic phospholipase A2 homolog piratoxin-1 of Bothrops pirajai (Piraja's lancehead).